Consider the following 884-residue polypeptide: DNA primase (884 aa).

A CHC2-type zinc finger spans residues 825 to 864 (CISSNHRNKTQSVRIFIVLYTNKKDEVTITLMSQCFAHKC).

It belongs to the herpesviridae DNA primase family. As to quaternary structure, associates with the helicase and the primase-associated factor to form the helicase-primase factor.

The protein localises to the host nucleus. In terms of biological role, essential component of the helicase/primase complex. Unwinds the DNA at the replication forks and generates single-stranded DNA for both leading and lagging strand synthesis. The primase initiates primer synthesis and thereby produces large amount of short RNA primers on the lagging strand that the polymerase elongates using dNTPs. This Equine herpesvirus 2 (strain 86/87) (EHV-2) protein is DNA primase (56).